Consider the following 137-residue polypeptide: Ribosome-binding factor A (137 aa).

The protein belongs to the RbfA family. In terms of assembly, monomer. Binds 30S ribosomal subunits, but not 50S ribosomal subunits or 70S ribosomes.

The protein localises to the cytoplasm. In terms of biological role, one of several proteins that assist in the late maturation steps of the functional core of the 30S ribosomal subunit. Associates with free 30S ribosomal subunits (but not with 30S subunits that are part of 70S ribosomes or polysomes). Required for efficient processing of 16S rRNA. May interact with the 5'-terminal helix region of 16S rRNA. This chain is Ribosome-binding factor A, found in Nitrobacter winogradskyi (strain ATCC 25391 / DSM 10237 / CIP 104748 / NCIMB 11846 / Nb-255).